The primary structure comprises 299 residues: UPF0282 protein TK1681 (299 aa).

The protein belongs to the UPF0282 family.

The polypeptide is UPF0282 protein TK1681 (Thermococcus kodakarensis (strain ATCC BAA-918 / JCM 12380 / KOD1) (Pyrococcus kodakaraensis (strain KOD1))).